The following is a 477-amino-acid chain: Cytochrome b mRNA maturase bI3 (477 aa).

Positions 1–163 are cytochrome b; it reads MRLLKSHPLL…IPWIGQDIVE (163 aa). 5 helical membrane-spanning segments follow: residues 32-52, 86-106, 113-133, 142-162, and 166-186; these read FGSL…TLAM, ASAF…YGSY, VWAI…LGYV, WGAT…QDIV, and IITL…VVVY. A maturase region spans residues 164–477; that stretch reads SKIITLIINL…YSTLNYPDAK (314 aa).

In the N-terminal section; belongs to the cytochrome b family. The protein in the C-terminal section; belongs to the LAGLIDADG endonuclease family.

Its subcellular location is the mitochondrion inner membrane. Functionally, mitochondrial mRNA maturase required for splicing of intron 3 of the cytochrome b (cob) gene, containing its own coding sequence. The polypeptide is Cytochrome b mRNA maturase bI3 (bI3) (Neurospora crassa (strain ATCC 24698 / 74-OR23-1A / CBS 708.71 / DSM 1257 / FGSC 987)).